A 447-amino-acid chain; its full sequence is UDP-N-acetylmuramoylalanine--D-glutamate ligase (447 aa).

130 to 136 is an ATP binding site; it reads GTSGKTT.

This sequence belongs to the MurCDEF family.

Its subcellular location is the cytoplasm. The enzyme catalyses UDP-N-acetyl-alpha-D-muramoyl-L-alanine + D-glutamate + ATP = UDP-N-acetyl-alpha-D-muramoyl-L-alanyl-D-glutamate + ADP + phosphate + H(+). It functions in the pathway cell wall biogenesis; peptidoglycan biosynthesis. Functionally, cell wall formation. Catalyzes the addition of glutamate to the nucleotide precursor UDP-N-acetylmuramoyl-L-alanine (UMA). The sequence is that of UDP-N-acetylmuramoylalanine--D-glutamate ligase from Oleidesulfovibrio alaskensis (strain ATCC BAA-1058 / DSM 17464 / G20) (Desulfovibrio alaskensis).